The primary structure comprises 181 residues: Epidermin decarboxylase (181 aa).

Residue His-67 is part of the active site.

It belongs to the HFCD (homooligomeric flavin containing Cys decarboxylase) superfamily. As to quaternary structure, homododecamer. The cofactor is FMN.

In terms of biological role, catalyzes the removal of two reducing equivalents (oxidative decarboxylation) from the cysteine residue of the C-terminal meso-lanthionine of epidermin to form a --C==C-- double bond. This is Epidermin decarboxylase (epiD) from Staphylococcus epidermidis.